A 356-amino-acid chain; its full sequence is S-adenosylmethionine:tRNA ribosyltransferase-isomerase (356 aa).

Belongs to the QueA family. Monomer.

The protein localises to the cytoplasm. It carries out the reaction 7-aminomethyl-7-carbaguanosine(34) in tRNA + S-adenosyl-L-methionine = epoxyqueuosine(34) in tRNA + adenine + L-methionine + 2 H(+). It participates in tRNA modification; tRNA-queuosine biosynthesis. In terms of biological role, transfers and isomerizes the ribose moiety from AdoMet to the 7-aminomethyl group of 7-deazaguanine (preQ1-tRNA) to give epoxyqueuosine (oQ-tRNA). The sequence is that of S-adenosylmethionine:tRNA ribosyltransferase-isomerase from Yersinia pestis.